The sequence spans 85 residues: UPF0386 protein Bind_1628 (85 aa).

Belongs to the UPF0386 family.

In Beijerinckia indica subsp. indica (strain ATCC 9039 / DSM 1715 / NCIMB 8712), this protein is UPF0386 protein Bind_1628.